Reading from the N-terminus, the 589-residue chain is Type I restriction enzyme EcoAI specificity subunit (589 aa).

It belongs to the type-I restriction system S methylase family. The type I restriction/modification system is composed of three polypeptides R, M and S. The restriction enzyme has stoichiometry R(2)M(2)S(1) while the methyltransferase is M(2)S(1).

The specificity (S) subunit of a type I restriction enzyme; this subunit dictates DNA sequence specificity. The M and S subunits together form a methyltransferase (MTase) that methylates A-2 on the top strand and A-3 on the bottom strand of the sequence 5'-GAGN(7)GTCA-3'. In the presence of the R subunit the complex can also act as an endonuclease, binding to the same target sequence but cutting the DNA some distance from this site. Whether the DNA is cut or modified depends on the methylation state of the target sequence. When the target site is unmodified, the DNA is cut. When the target site is hemimethylated, the complex acts as a maintenance MTase modifying the DNA so that both strands become methylated. After locating a non-methylated recognition site, the enzyme complex serves as a molecular motor that translocates DNA in an ATP-dependent manner until a collision occurs that triggers cleavage. The polypeptide is Type I restriction enzyme EcoAI specificity subunit (Escherichia coli).